The chain runs to 506 residues: Maturase K (506 aa).

This sequence belongs to the intron maturase 2 family. MatK subfamily.

It localises to the plastid. The protein resides in the chloroplast. Its function is as follows. Usually encoded in the trnK tRNA gene intron. Probably assists in splicing its own and other chloroplast group II introns. The chain is Maturase K from Calluna vulgaris (Heather).